The sequence spans 564 residues: 60 kDa lysophospholipase (564 aa).

The Asparaginase/glutaminase domain occupies 9–355 (RRLLAIYTGG…NDRKKLLAKD (347 aa)). The Acyl-ester intermediate role is filled by Thr-19. The tract at residues 41-350 (TLHMFHDEEY…PGLSLNDRKK (310 aa)) is asparaginase. Substrate contacts are provided by residues 84–86 (DSS) and 116–117 (TD). ANK repeat units follow at residues 141-170 (GAQV…YVIP), 396-426 (VLLP…DLNL), 430-459 (SGQT…DVDA), 463-492 (DGQS…RLSP), and 530-559 (DGHC…SVCA). At Ser-478 the chain carries Phosphoserine.

This sequence in the N-terminal section; belongs to the asparaginase 1 family. As to quaternary structure, monomer.

It catalyses the reaction a 1-acyl-sn-glycero-3-phosphocholine + H2O = sn-glycerol 3-phosphocholine + a fatty acid + H(+). The enzyme catalyses L-asparagine + H2O = L-aspartate + NH4(+). The catalysed reaction is a 1-O-alkyl-2-acetyl-sn-glycero-3-phosphocholine + H2O = a 1-O-alkyl-sn-glycero-3-phosphocholine + acetate + H(+). It carries out the reaction 1-hexadecanoyl-sn-glycero-3-phosphocholine + H2O = sn-glycerol 3-phosphocholine + hexadecanoate + H(+). It catalyses the reaction 2 1-hexadecanoyl-sn-glycero-3-phosphocholine = 1,2-dihexadecanoyl-sn-glycero-3-phosphocholine + sn-glycerol 3-phosphocholine. The enzyme catalyses 1-octadecanoyl-sn-glycero-3-phosphocholine + H2O = octadecanoate + sn-glycerol 3-phosphocholine + H(+). The catalysed reaction is 1-(9Z-octadecenoyl)-sn-glycero-3-phosphocholine + H2O = sn-glycerol 3-phosphocholine + (9Z)-octadecenoate + H(+). It carries out the reaction 1-hexadecanoyl-sn-glycero-3-phosphoethanolamine + H2O = sn-glycero-3-phosphoethanolamine + hexadecanoate + H(+). It catalyses the reaction 1-(9Z-octadecenoyl)-sn-glycero-3-phosphoethanolamine + H2O = sn-glycero-3-phosphoethanolamine + (9Z)-octadecenoate + H(+). The enzyme catalyses 1-hexadecanoyl-sn-glycero-3-phosphoethanolamine + 1-hexadecanoyl-sn-glycero-3-phosphocholine = 1,2-dihexadecanoyl-sn-glycero-3-phosphoethanolamine + sn-glycerol 3-phosphocholine. The catalysed reaction is 2-(5Z,8Z,11Z,14Z)-eicosatetraenoyl-sn-glycero-3-phosphocholine + H2O = sn-glycerol 3-phosphocholine + (5Z,8Z,11Z,14Z)-eicosatetraenoate + H(+). It carries out the reaction 2-hexadecanoyl-sn-glycero-3-phosphocholine + H2O = sn-glycerol 3-phosphocholine + hexadecanoate + H(+). It catalyses the reaction 2 2-hexadecanoyl-sn-glycero-3-phosphocholine = 1,2-dihexadecanoyl-sn-glycero-3-phosphocholine + sn-glycerol 3-phosphocholine. The enzyme catalyses 1-O-(9Z)-octadecenoyl-2-O-acetyl-sn-glycero-3-phosphocholine + H2O = 2-acetyl-sn-glycero-3-phosphocholine + (9Z)-octadecenoate + H(+). The catalysed reaction is a 1-acyl-sn-glycero-3-phospho-(1D-myo-inositol) + 1-hexadecanoyl-sn-glycero-3-phosphocholine = a 1-acyl-2-hexadecanoyl-sn-glycero-3-phospho-(1D-myo-inositol) + sn-glycerol 3-phosphocholine. It carries out the reaction 2 2-(5Z,8Z,11Z,14Z)-eicosatetraenoyl-sn-glycero-3-phosphocholine = 1,2-di-(5Z,8Z,11Z,14Z-eicosatetraenoyl)-sn-glycero-3-phosphocholine + sn-glycerol 3-phosphocholine. Functionally, exhibits lysophospholipase, transacylase, PAF acetylhydrolase and asparaginase activities. Can catalyze three types of transacylation reactions: (1) acyl transfer from 1-acyl-sn-glycero-3-phosphocholine (1-acyl-GPC) to the sn-1(3) positions of glycerol and 2-acylglycerol (sn-1 to -1(3) transfer), (2) acyl transfer from 1-acyl-GPC to the sn-2 positions of 1-acyl-GPC, 1-acyl-sn-glycero-3-phosphoethanolamine (1-acyl-GPE), and other lysophospholipids (sn-1 to -2 transfer) and (3) acyl transfer from 2-acyl-GPC to the sn-1 position of 2-acyl-GPC and 2-acyl-GPE (sn-2 to -1 transfer). Mediates the synthesis of 1-arachidonoyl species of phospholipids by transferring the arachidonoyl residue from 2-arachidonoyl lysophospholipid to the sn-1 position of 2-acyl lysophospholipid. In Mus musculus (Mouse), this protein is 60 kDa lysophospholipase (Aspg).